A 123-amino-acid chain; its full sequence is Anti-lipopolysaccharide factor (123 aa).

Residues 1–26 (MRTRVMAGLCVALVVMCLYMPQPCEA) form the signal peptide. A disulfide bridge connects residues cysteine 55 and cysteine 76.

Strong expression in hemocytes, heart and muscle, with weaker expression detected in gills and hepatopancreas. No expression detected in eyes.

It is found in the secreted. Binds to bacterial LPS and may specifically inhibit the LPS-mediated activation of the hemolymph coagulation. It has a strong antibacterial effect especially on the growth of Gram-negative bacteria. This Scylla serrata (Mud crab) protein is Anti-lipopolysaccharide factor.